The chain runs to 218 residues: Chymotrypsin-2 (218 aa).

The 218-residue stretch at 1-218 (IVGGTDAPRG…FLDWIQKNQL (218 aa)) folds into the Peptidase S1 domain. A disulfide bridge links Cys-25 with Cys-40. Active-site charge relay system residues include His-39 and Asp-84. Intrachain disulfides connect Cys-148-Cys-161 and Cys-171-Cys-195. The active-site Charge relay system is the Ser-175.

It belongs to the peptidase S1 family.

It localises to the secreted. Its subcellular location is the extracellular space. It catalyses the reaction Preferential cleavage: Tyr-|-Xaa, Trp-|-Xaa, Phe-|-Xaa, Leu-|-Xaa.. This is Chymotrypsin-2 from Vespa crabro (European hornet).